The following is a 466-amino-acid chain: UDP-N-acetylmuramate--L-alanine ligase (466 aa).

ATP is bound at residue 117-123 (GTHGKTT).

The protein belongs to the MurCDEF family.

Its subcellular location is the cytoplasm. It carries out the reaction UDP-N-acetyl-alpha-D-muramate + L-alanine + ATP = UDP-N-acetyl-alpha-D-muramoyl-L-alanine + ADP + phosphate + H(+). It participates in cell wall biogenesis; peptidoglycan biosynthesis. Its function is as follows. Cell wall formation. In Streptomyces griseus subsp. griseus (strain JCM 4626 / CBS 651.72 / NBRC 13350 / KCC S-0626 / ISP 5235), this protein is UDP-N-acetylmuramate--L-alanine ligase.